We begin with the raw amino-acid sequence, 124 residues long: MTNLLFVALGGSIGAVLRYLMSIIMIQLFGSSFPFGTLLVNVLGSFFMGIVYALGQVSHVSPELKALVGVGLLGALTTFSTFSNETLLLMQQGYWFKSLINVLLNVSLCIFMVYLGQQLVFSRV.

The next 4 helical transmembrane spans lie at 4 to 24 (LLFVALGGSIGAVLRYLMSII), 35 to 55 (FGTLLVNVLGSFFMGIVYALG), 62 to 82 (PELKALVGVGLLGALTTFSTF), and 95 to 115 (WFKSLINVLLNVSLCIFMVYL). 2 residues coordinate Na(+): Gly74 and Thr77.

The protein belongs to the fluoride channel Fluc/FEX (TC 1.A.43) family.

Its subcellular location is the cell inner membrane. The catalysed reaction is fluoride(in) = fluoride(out). Na(+) is not transported, but it plays an essential structural role and its presence is essential for fluoride channel function. In terms of biological role, fluoride-specific ion channel. Important for reducing fluoride concentration in the cell, thus reducing its toxicity. The protein is Fluoride-specific ion channel FluC of Shewanella denitrificans (strain OS217 / ATCC BAA-1090 / DSM 15013).